The following is a 152-amino-acid chain: Ribosome maturation factor RimP (152 aa).

This sequence belongs to the RimP family.

Its subcellular location is the cytoplasm. Required for maturation of 30S ribosomal subunits. In Pseudoalteromonas atlantica (strain T6c / ATCC BAA-1087), this protein is Ribosome maturation factor RimP.